Reading from the N-terminus, the 311-residue chain is Aspartate carbamoyltransferase catalytic subunit (311 aa).

Residues Arg-58 and Thr-59 each coordinate carbamoyl phosphate. Lys-86 provides a ligand contact to L-aspartate. 3 residues coordinate carbamoyl phosphate: Arg-108, His-136, and Gln-139. 2 residues coordinate L-aspartate: Arg-169 and Arg-224. The carbamoyl phosphate site is built by Gly-265 and Pro-266.

Belongs to the aspartate/ornithine carbamoyltransferase superfamily. ATCase family. As to quaternary structure, heterododecamer (2C3:3R2) of six catalytic PyrB chains organized as two trimers (C3), and six regulatory PyrI chains organized as three dimers (R2).

It carries out the reaction carbamoyl phosphate + L-aspartate = N-carbamoyl-L-aspartate + phosphate + H(+). Its pathway is pyrimidine metabolism; UMP biosynthesis via de novo pathway; (S)-dihydroorotate from bicarbonate: step 2/3. Catalyzes the condensation of carbamoyl phosphate and aspartate to form carbamoyl aspartate and inorganic phosphate, the committed step in the de novo pyrimidine nucleotide biosynthesis pathway. The chain is Aspartate carbamoyltransferase catalytic subunit from Geotalea uraniireducens (strain Rf4) (Geobacter uraniireducens).